An 860-amino-acid chain; its full sequence is Leucine--tRNA ligase (860 aa).

Positions 42 to 52 (PYPSGRLHMGH) match the 'HIGH' region motif. A 'KMSKS' region motif is present at residues 619-623 (KMSKS). Lys-622 is a binding site for ATP.

Belongs to the class-I aminoacyl-tRNA synthetase family.

It localises to the cytoplasm. The enzyme catalyses tRNA(Leu) + L-leucine + ATP = L-leucyl-tRNA(Leu) + AMP + diphosphate. This chain is Leucine--tRNA ligase, found in Salmonella typhimurium (strain LT2 / SGSC1412 / ATCC 700720).